Reading from the N-terminus, the 55-residue chain is Ferredoxin (55 aa).

4Fe-4S ferredoxin-type domains follow at residues 2 to 27 and 28 to 55; these read YKIT…SESD and AVRV…IVEG. [4Fe-4S] cluster is bound by residues Cys-8, Cys-11, Cys-14, Cys-18, Cys-37, Cys-40, Cys-43, and Cys-47.

[4Fe-4S] cluster is required as a cofactor.

Its function is as follows. Ferredoxins are iron-sulfur proteins that transfer electrons in a wide variety of metabolic reactions. In Clostridium sp. (strain M-E), this protein is Ferredoxin.